The primary structure comprises 568 residues: MESLGLQTVTLSDGTTAYVQQAIKGEKLLEGQVIQLEDGTTAYIHQVTIQKESFSFEDGQPVQLEDGSMAYIHHTPKEGYDPSALEAVQLEDGSTAYIHHPVSVPPDSTILAVQTEVGLEDLAAEEEEGFGADTVVALEQYASKVLHDSPASHNGKGQQVGDRAFRCGYKGCGRLYTTAHHLKVHERAHTGDRSYRCDFPSCGKAFATGYGLKSHVRTHTGEKPYKCPEELCSKAFKTSGDLQKHVRTHTGERPFRCPFEGCGRSFTTSNIRKVHVRTHTGERPYTCPEPHCGRGFTSATNYKNHVRIHTGEKPYVCTVPGCGKRFTEYSSLYKHHVVHTHCKPYTCSSCGKTYRQTSTLAMHKRSAHGELEATEESEQALYEQQQLEAASAAEESPSPKPTHIAYLSEVKEESSDIPTQVAMVTEEDGAPQVALITQDGTQQVSLSPEDLQALGSAISVVTQHRSTTLTIPGHQEELATSGTHTVTMVSADGTQTQPVTIITSGALVTEDSSVASLHHQQVALLATANGTHIAVQLEDQQTLEEVISVATSAMQQGAVTLETTESGC.

Lysine 24 is covalently cross-linked (Glycyl lysine isopeptide (Lys-Gly) (interchain with G-Cter in SUMO2)). 3 tandem repeats follow at residues 34 to 45, 62 to 73, and 88 to 99. Residues 34 to 99 are 3 X 12 AA approximate repeats; sequence IQLEDGTTAY…LEDGSTAYIH (66 aa). 7 consecutive C2H2-type zinc fingers follow at residues 165-189, 195-219, 225-249, 255-279, 285-309, 315-339, and 345-368; these read FRCG…ERAH, YRCD…VRTH, YKCP…VRTH, FRCP…VRTH, YTCP…VRIH, YVCT…HVVH, and YTCS…RSAH. A disordered region spans residues 365–401; the sequence is RSAHGELEATEESEQALYEQQQLEAASAAEESPSPKP. A compositionally biased stretch (low complexity) spans 379 to 396; that stretch reads QALYEQQQLEAASAAEES.

This sequence belongs to the krueppel C2H2-type zinc-finger protein family.

It localises to the nucleus. In terms of biological role, may be involved in transcriptional regulation. In Rattus norvegicus (Rat), this protein is Zinc finger protein 76 (Znf76).